Consider the following 492-residue polypeptide: Catalase (492 aa).

Residues H65 and N138 contribute to the active site. Y348 lines the heme pocket.

It belongs to the catalase family. As to quaternary structure, homotetramer. The cofactor is heme.

Its subcellular location is the cytoplasm. The protein localises to the cytosol. It localises to the peroxisome matrix. It carries out the reaction 2 H2O2 = O2 + 2 H2O. Functionally, catalyzes the degradation of hydrogen peroxide (H(2)O(2)) generated by peroxisomal oxidases to water and oxygen, thereby protecting cells from the toxic effects of hydrogen peroxide. The polypeptide is Catalase (Soldanella alpina (Alpine snowbell)).